A 212-amino-acid chain; its full sequence is Small ribosomal subunit protein eS1 (212 aa).

Belongs to the eukaryotic ribosomal protein eS1 family.

This is Small ribosomal subunit protein eS1 from Ignicoccus hospitalis (strain KIN4/I / DSM 18386 / JCM 14125).